We begin with the raw amino-acid sequence, 425 residues long: Trigger factor (425 aa).

The PPIase FKBP-type domain maps to 163–248 (GDTAVIDFEG…IHEIKTKELP (86 aa)).

Belongs to the FKBP-type PPIase family. Tig subfamily.

It is found in the cytoplasm. It catalyses the reaction [protein]-peptidylproline (omega=180) = [protein]-peptidylproline (omega=0). In terms of biological role, involved in protein export. Acts as a chaperone by maintaining the newly synthesized protein in an open conformation. Functions as a peptidyl-prolyl cis-trans isomerase. This is Trigger factor from Bacillus mycoides (strain KBAB4) (Bacillus weihenstephanensis).